The chain runs to 437 residues: ATP-dependent protease ATPase subunit HslU (437 aa).

ATP contacts are provided by residues Val-18, 60 to 65 (GCGKTE), Asp-250, Glu-315, and Arg-387.

This sequence belongs to the ClpX chaperone family. HslU subfamily. A double ring-shaped homohexamer of HslV is capped on each side by a ring-shaped HslU homohexamer. The assembly of the HslU/HslV complex is dependent on binding of ATP.

It is found in the cytoplasm. Its function is as follows. ATPase subunit of a proteasome-like degradation complex; this subunit has chaperone activity. The binding of ATP and its subsequent hydrolysis by HslU are essential for unfolding of protein substrates subsequently hydrolyzed by HslV. HslU recognizes the N-terminal part of its protein substrates and unfolds these before they are guided to HslV for hydrolysis. The protein is ATP-dependent protease ATPase subunit HslU of Methylorubrum extorquens (strain PA1) (Methylobacterium extorquens).